We begin with the raw amino-acid sequence, 302 residues long: Recombination-associated protein RdgC (302 aa).

The protein belongs to the RdgC family.

Its subcellular location is the cytoplasm. It localises to the nucleoid. In terms of biological role, may be involved in recombination. The chain is Recombination-associated protein RdgC from Actinobacillus pleuropneumoniae serotype 5b (strain L20).